A 221-amino-acid polypeptide reads, in one-letter code: Adenylate kinase (221 aa).

10–15 lines the ATP pocket; sequence GAGKGT. The segment at 30–59 is NMP; the sequence is STGDMLRAAVKAGTPLGVEAKKVMDAGGLV. AMP is bound by residues Thr-31, Arg-36, 57–59, 85–88, and Gln-92; these read GLV and GFPR. Residues 122 to 159 form an LID region; the sequence is GRRVHVASGRTYHLKYNPPKTEGVDDETGEPLIQRDDD. ATP contacts are provided by residues Arg-123 and 132–133; that span reads TY. A disordered region spans residues 138–159; sequence NPPKTEGVDDETGEPLIQRDDD. AMP contacts are provided by Arg-156 and Arg-167. Position 207 (Gly-207) interacts with ATP.

This sequence belongs to the adenylate kinase family. In terms of assembly, monomer.

It is found in the cytoplasm. It catalyses the reaction AMP + ATP = 2 ADP. It participates in purine metabolism; AMP biosynthesis via salvage pathway; AMP from ADP: step 1/1. Catalyzes the reversible transfer of the terminal phosphate group between ATP and AMP. Plays an important role in cellular energy homeostasis and in adenine nucleotide metabolism. The polypeptide is Adenylate kinase (Cupriavidus taiwanensis (strain DSM 17343 / BCRC 17206 / CCUG 44338 / CIP 107171 / LMG 19424 / R1) (Ralstonia taiwanensis (strain LMG 19424))).